The primary structure comprises 185 residues: Large ribosomal subunit protein uL22 (185 aa).

Belongs to the universal ribosomal protein uL22 family. In terms of assembly, part of the 50S ribosomal subunit.

Its function is as follows. This protein binds specifically to 23S rRNA. It makes multiple contacts with different domains of the 23S rRNA in the assembled 50S subunit and ribosome. Functionally, the globular domain of the protein is located near the polypeptide exit tunnel on the outside of the subunit, while an extended beta-hairpin is found that lines the wall of the exit tunnel in the center of the 70S ribosome. The protein is Large ribosomal subunit protein uL22 of Pyrobaculum islandicum (strain DSM 4184 / JCM 9189 / GEO3).